We begin with the raw amino-acid sequence, 126 residues long: Fluoride-specific ion channel FluC (126 aa).

The next 4 helical transmembrane spans lie at 6–26 (FLAVGVGAALGAWLRWALAIL), 36–56 (YGTLAANLVGGYLIGVAVGFF), 69–89 (LVITGFLGGLTTFSTFSGEVV), and 99–119 (IGVLHIVAHLGGSLFLTMLGF). 2 residues coordinate Na(+): Gly-76 and Thr-79.

This sequence belongs to the fluoride channel Fluc/FEX (TC 1.A.43) family.

It localises to the cell inner membrane. It carries out the reaction fluoride(in) = fluoride(out). With respect to regulation, na(+) is not transported, but it plays an essential structural role and its presence is essential for fluoride channel function. Fluoride-specific ion channel. Important for reducing fluoride concentration in the cell, thus reducing its toxicity. This Ralstonia pickettii (strain 12J) protein is Fluoride-specific ion channel FluC.